Reading from the N-terminus, the 173-residue chain is Ribosome maturation factor RimM (173 aa).

The 75-residue stretch at 95–169 folds into the PRC barrel domain; it reads EGSYYFKDIL…RIEVTLLEGL (75 aa).

The protein belongs to the RimM family. In terms of assembly, binds ribosomal protein uS19.

The protein localises to the cytoplasm. In terms of biological role, an accessory protein needed during the final step in the assembly of 30S ribosomal subunit, possibly for assembly of the head region. Essential for efficient processing of 16S rRNA. May be needed both before and after RbfA during the maturation of 16S rRNA. It has affinity for free ribosomal 30S subunits but not for 70S ribosomes. The sequence is that of Ribosome maturation factor RimM from Lactobacillus johnsonii (strain CNCM I-12250 / La1 / NCC 533).